The sequence spans 294 residues: Nucleotide-binding protein lp_0779 (294 aa).

12–19 (GMSGAGKT) is an ATP binding site. 62–65 (DLRS) provides a ligand contact to GTP.

The protein belongs to the RapZ-like family.

Displays ATPase and GTPase activities. This Lactiplantibacillus plantarum (strain ATCC BAA-793 / NCIMB 8826 / WCFS1) (Lactobacillus plantarum) protein is Nucleotide-binding protein lp_0779.